A 126-amino-acid chain; its full sequence is Fluoride-specific ion channel FluC (126 aa).

A run of 4 helical transmembrane segments spans residues 9-29 (LAVF…GFQL), 35-55 (LTAT…LYAI), 63-83 (LLHL…SFVL), and 94-114 (WSIG…AAIL). Na(+)-binding residues include Gly-73 and Ser-76.

Belongs to the fluoride channel Fluc/FEX (TC 1.A.43) family.

It localises to the cell inner membrane. The catalysed reaction is fluoride(in) = fluoride(out). Its activity is regulated as follows. Na(+) is not transported, but it plays an essential structural role and its presence is essential for fluoride channel function. Fluoride-specific ion channel. Important for reducing fluoride concentration in the cell, thus reducing its toxicity. This is Fluoride-specific ion channel FluC from Ruegeria pomeroyi (strain ATCC 700808 / DSM 15171 / DSS-3) (Silicibacter pomeroyi).